A 282-amino-acid chain; its full sequence is 4-diphosphocytidyl-2-C-methyl-D-erythritol kinase (282 aa).

Lys12 is an active-site residue. 95 to 105 (PMGGGIGGGSS) provides a ligand contact to ATP. Asp137 is a catalytic residue.

This sequence belongs to the GHMP kinase family. IspE subfamily.

It carries out the reaction 4-CDP-2-C-methyl-D-erythritol + ATP = 4-CDP-2-C-methyl-D-erythritol 2-phosphate + ADP + H(+). Its pathway is isoprenoid biosynthesis; isopentenyl diphosphate biosynthesis via DXP pathway; isopentenyl diphosphate from 1-deoxy-D-xylulose 5-phosphate: step 3/6. Its function is as follows. Catalyzes the phosphorylation of the position 2 hydroxy group of 4-diphosphocytidyl-2C-methyl-D-erythritol. The chain is 4-diphosphocytidyl-2-C-methyl-D-erythritol kinase from Pseudomonas aeruginosa (strain ATCC 15692 / DSM 22644 / CIP 104116 / JCM 14847 / LMG 12228 / 1C / PRS 101 / PAO1).